Here is a 111-residue protein sequence, read N- to C-terminus: CRIB domain-containing protein RIC2 (111 aa).

Residues 71-84 enclose the CRIB domain; the sequence is IGFPTDVKHLSHIG.

In terms of assembly, interacts with ARAC11/ROP1. Expressed in roots, leaves, stems, flowers, siliques and pollen.

It localises to the cell membrane. Functions as a downstream effector of Rho-related GTP binding proteins of the 'Rho of Plants' (ROPs) family. Participates in the propagation of ROP GTPase signals in specific cellular responses. Is involved in pollen tube growth regulation through its interaction with ARAC11/ROP1. This chain is CRIB domain-containing protein RIC2 (RIC2), found in Arabidopsis thaliana (Mouse-ear cress).